The sequence spans 449 residues: 3-phosphoshikimate 1-carboxyvinyltransferase (449 aa).

Residues K28, S29, and R33 each coordinate 3-phosphoshikimate. Phosphoenolpyruvate is bound at residue K28. 2 residues coordinate phosphoenolpyruvate: G105 and R133. S179, Q181, D332, and K359 together coordinate 3-phosphoshikimate. Q181 is a binding site for phosphoenolpyruvate. D332 serves as the catalytic Proton acceptor. R363 and R406 together coordinate phosphoenolpyruvate.

The protein belongs to the EPSP synthase family. In terms of assembly, monomer.

It localises to the cytoplasm. It catalyses the reaction 3-phosphoshikimate + phosphoenolpyruvate = 5-O-(1-carboxyvinyl)-3-phosphoshikimate + phosphate. It functions in the pathway metabolic intermediate biosynthesis; chorismate biosynthesis; chorismate from D-erythrose 4-phosphate and phosphoenolpyruvate: step 6/7. Catalyzes the transfer of the enolpyruvyl moiety of phosphoenolpyruvate (PEP) to the 5-hydroxyl of shikimate-3-phosphate (S3P) to produce enolpyruvyl shikimate-3-phosphate and inorganic phosphate. This chain is 3-phosphoshikimate 1-carboxyvinyltransferase, found in Nitrobacter winogradskyi (strain ATCC 25391 / DSM 10237 / CIP 104748 / NCIMB 11846 / Nb-255).